The primary structure comprises 232 residues: LexA repressor (232 aa).

Positions 35–55 form a DNA-binding region, H-T-H motif; that stretch reads IREIGDAAGLQSTSSVAYQLK. A compositionally biased stretch (basic and acidic residues) spans 61–85; that stretch reads GFLRRDPNKPRAVDVRHLPETESRS. The disordered stretch occupies residues 61 to 104; the sequence is GFLRRDPNKPRAVDVRHLPETESRSSKAATQAKSKAPQAGVHDP. The span at 86-99 shows a compositional bias: low complexity; that stretch reads SKAATQAKSKAPQA. Catalysis depends on for autocatalytic cleavage activity residues Ser156 and Lys193.

This sequence belongs to the peptidase S24 family. As to quaternary structure, homodimer.

It catalyses the reaction Hydrolysis of Ala-|-Gly bond in repressor LexA.. Functionally, represses a number of genes involved in the response to DNA damage (SOS response), including recA and lexA. In the presence of single-stranded DNA, RecA interacts with LexA causing an autocatalytic cleavage which disrupts the DNA-binding part of LexA, leading to derepression of the SOS regulon and eventually DNA repair. The polypeptide is LexA repressor (Corynebacterium glutamicum (strain ATCC 13032 / DSM 20300 / JCM 1318 / BCRC 11384 / CCUG 27702 / LMG 3730 / NBRC 12168 / NCIMB 10025 / NRRL B-2784 / 534)).